Consider the following 251-residue polypeptide: DNA repair protein RecO (251 aa).

It belongs to the RecO family.

Its function is as follows. Involved in DNA repair and RecF pathway recombination. In Acetivibrio thermocellus (strain ATCC 27405 / DSM 1237 / JCM 9322 / NBRC 103400 / NCIMB 10682 / NRRL B-4536 / VPI 7372) (Clostridium thermocellum), this protein is DNA repair protein RecO.